A 471-amino-acid polypeptide reads, in one-letter code: Transcription initiation factor TFIID subunit 7-like (471 aa).

Disordered regions lie at residues 1–84 (MERG…RQGT), 192–211 (SPEG…TGPT), and 328–377 (EMMG…EELE). Phosphoserine is present on Ser199. A compositionally biased stretch (acidic residues) spans 347 to 377 (GDDDDDEDEDDEDYGNEKEEEETDNSEEELE). Residues 358–433 (EDYGNEKEEE…QKELLRKVEN (76 aa)) adopt a coiled-coil conformation.

Belongs to the TAF7 family. In terms of assembly, TFIID is composed of TATA binding protein (TBP) and a number of TBP-associated factors (TAFs). TAF7L may replace TAF7 in a spermatogenesis-specific form of TFIID. Interacts with TBP; the interaction occurs in a sub-population of cells (pachytene and haploid round spermatids) and is developmentally regulated through differential intracellular localization of the two proteins. Interacts with TAF1. In terms of tissue distribution, testis-specific (at protein level). Expressed during spermatogenesis from spermatogonia stage up to the stage of round spermatids.

It is found in the nucleus. The protein localises to the cytoplasm. In terms of biological role, probably functions as a spermatogenesis-specific component of the DNA-binding general transcription factor complex TFIID, a multimeric protein complex that plays a central role in mediating promoter responses to various activators and repressors. May play a role in spermatogenesis. The polypeptide is Transcription initiation factor TFIID subunit 7-like (Taf7l) (Mus musculus (Mouse)).